The following is a 415-amino-acid chain: Teichoic acid D-alanyltransferase (415 aa).

At 1 to 16 the chain is on the extracellular side; the sequence is MIDFLKQLPHLEPYGN. A helical transmembrane segment spans residues 17–36; it reads PFYFIYLGIALLPIFIGLFF. The Cytoplasmic portion of the chain corresponds to 37 to 40; it reads KKRF. Residues 41–56 traverse the membrane as a helical segment; the sequence is AIYECLVSITFIVLAL. Over 57–60 the chain is Extracellular; that stretch reads TGTH. The chain crosses the membrane as a helical span at residues 61 to 87; the sequence is ASQILALLFYIVWQIIWVYSYKRYRSQ. The Cytoplasmic portion of the chain corresponds to 88–90; sequence RDN. The chain crosses the membrane as a helical span at residues 91 to 115; sequence KWVFYLHSFLVVLPLILVKVEPTIN. Residues 116 to 125 are Extracellular-facing; that stretch reads GTQSLLNFLG. The chain crosses the membrane as a helical span at residues 126–142; it reads ISYLTFRAVGMIIEMRD. At 143–149 the chain is on the cytoplasmic side; that stretch reads GVLKEFT. The stretch at 150–179 is an intramembrane region; the sequence is LGEFLRFMLFMPTFTSGPIDRFKRFNEDYQ. Residues 180–183 are Cytoplasmic-facing; that stretch reads SIPN. The helical transmembrane segment at 184–227 threads the bilayer; it reads RDELLNMLEQAVKYIMLGFLYKFVLAQIFGSMLLPPLKAQALSQ. The Extracellular portion of the chain corresponds to 228-232; it reads GGIFN. A helical membrane pass occupies residues 233–264; the sequence is LPTLGVMYVYGFDLFFDFAGYSMFALAVSNLM. Over 265–274 the chain is Cytoplasmic; that stretch reads GIKSPINFDK. Residues 275 to 311 lie within the membrane without spanning it; that stretch reads PFISRDMKEFWNRWHMSLSFWFRDFVFMRLVIVLMRN. The Cytoplasmic portion of the chain corresponds to 312–316; it reads KVFKN. A helical membrane pass occupies residues 317–336; sequence RNTTSNVAYIINMMVMGFWH. Residue H336 is part of the active site. At 337–339 the chain is on the extracellular side; it reads GIT. Residues 340–373 traverse the membrane as a helical segment; sequence WYYIAYGIFHGIGLVINDAWLRKKKTINKDRKKA. At 374-381 the chain is on the cytoplasmic side; it reads GLKPLPEN. A helical transmembrane segment spans residues 382 to 404; sequence KWTKALGIFITFNTVMLSFLIFS. Residues 405–415 are Extracellular-facing; that stretch reads GFLNDLWFTKK.

Belongs to the membrane-bound acyltransferase family.

It is found in the cell membrane. It functions in the pathway cell wall biogenesis; lipoteichoic acid biosynthesis. Its function is as follows. O-acyltransferase that catalyzes D-alanylation of both teichoic acid and lipoteichoic acid (LTA). D-alanylation of LTA plays an important role in modulating the properties of the cell wall in Gram-positive bacteria, influencing the net charge of the cell wall. Catalyzes D-alanylation from DltC carrier protein. This Streptococcus thermophilus (strain ATCC BAA-250 / LMG 18311) protein is Teichoic acid D-alanyltransferase.